The chain runs to 470 residues: FAD-dependent monooxygenase dpchE (470 aa).

A signal peptide spans 1–24; it reads MSEPHFKVIIVGGSITGLTLAHSL. Residues glutamate 35, glycine 49, and arginine 108 each coordinate FAD. An N-linked (GlcNAc...) asparagine glycan is attached at asparagine 128. Residue arginine 193 is part of the active site. Residues aspartate 312 and alanine 325 each contribute to the FAD site. A helical membrane pass occupies residues 447-463; sequence WAVVSRSVLLLVGLAIL.

Belongs to the paxM FAD-dependent monooxygenase family. FAD serves as cofactor.

Its subcellular location is the membrane. The protein operates within secondary metabolite biosynthesis; terpenoid biosynthesis. FAD-dependent monooxygenase; part of the gene cluster that mediates the biosynthesis of the diterpenoid pyrones higginsianins A and B. The first step of the pathway is the synthesis of the alpha-pyrone moiety by the polyketide synthase dpchA via condensation of one acetyl-CoA starter unit with 3 malonyl-CoA units and 2 methylations. The alpha-pyrone is then combined with geranylgeranyl pyrophosphate (GGPP) formed by the GGPP synthase dpchD through the action of the prenyltransferase dpchC to yield a linear alpha-pyrone diterpenoid. Subsequent steps in the diterpenoid pyrone biosynthetic pathway involve the decalin core formation, which is initiated by the epoxidation of the C10-C11 olefin by the FAD-dependent oxidoreductase dpchE, and is followed by a cyclization cascade catalyzed by the terpene cyclase dpchB. The short chain dehydrogenase/reductase dpchG then oxidizes the 8S hydroxy group to a ketone and the short chain dehydrogenase/reductase dpchH reduces the ketone to the 8R hydroxy group to yield higginsianin B. Finally, the FAD-dependent oxidoreductase dpchF converts higginsianin B into higginsianin A. This is FAD-dependent monooxygenase dpchE from Colletotrichum higginsianum (strain IMI 349063) (Crucifer anthracnose fungus).